The sequence spans 84 residues: Gas vesicle protein M1 (84 aa).

Residues 1-25 (MEPTKDETHAIVEFVDVLLRDGAVI) form an interacts with GvpL1 region. The segment at 5-21 (KDETHAIVEFVDVLLRD) is alpha helix 1. Beta-strand stretches follow at residues 27 to 29 (ADV) and 41 to 43 (ISL). Positions 44-48 (RAAIA) match the Conserved in GvpJ1/2 but not GvpA motif. Alpha helix regions lie at residues 46–56 (AIAGMTTMTEY) and 62–84 (WDAA…RRED).

The protein belongs to the gas vesicle GvpA family. In terms of assembly, gvpF to GvpM interact with each other in vitro, and may form multi-subunit complex(es). Might interact with GvpA1.

It is found in the gas vesicle. Proteins GvpF to GvpM might be involved in nucleating gas vesicle formation. A minor component of the gas vesicle. Gas vesicles are hollow, gas filled proteinaceous nanostructures found in several microbial planktonic microorganisms. They allow positioning of halobacteria at the optimal depth for growth in the poorly aerated, shallow brine pools of their habitat. In terms of biological role, expression of a 9.5 kb p-vac DNA fragment containing 2 divergently transcribed regions (gvpD-gvpE-gvpF-gvpG-gvpH-gvpI-gvpJ-gvpK-gvpL-gvpM and gvpA-gvpC-gvpN-gvpO) allows H.volcanii to produce gas vesicles. All site-directed mutagenesis is tested in H.volcanii. A minimal gas vesicle can be made in H.volcanii by gvpA1-gvpO1 plus gvpF1-gvpG1-gvpJ1-gvpK1-gvpL1-gvpM1; lack of enough GvpJ1 prevents formation. A similar region restores gas vesicle production in H.halobium without the p-vac locus, but it still has the c-vac locus. The protein is Gas vesicle protein M1 (gvpM11) of Halobacterium salinarum (strain ATCC 700922 / JCM 11081 / NRC-1) (Halobacterium halobium).